The sequence spans 464 residues: 3-isopropylmalate dehydratase large subunit (464 aa).

[4Fe-4S] cluster is bound by residues Cys-337, Cys-397, and Cys-400.

The protein belongs to the aconitase/IPM isomerase family. LeuC type 1 subfamily. As to quaternary structure, heterodimer of LeuC and LeuD. [4Fe-4S] cluster serves as cofactor.

The catalysed reaction is (2R,3S)-3-isopropylmalate = (2S)-2-isopropylmalate. The protein operates within amino-acid biosynthesis; L-leucine biosynthesis; L-leucine from 3-methyl-2-oxobutanoate: step 2/4. Catalyzes the isomerization between 2-isopropylmalate and 3-isopropylmalate, via the formation of 2-isopropylmaleate. The sequence is that of 3-isopropylmalate dehydratase large subunit from Bacillus anthracis (strain A0248).